The primary structure comprises 460 residues: Cysteine--tRNA ligase (460 aa).

Position 29 (Cys29) interacts with Zn(2+). A 'HIGH' region motif is present at residues 31-41 (ATPQSSPHIGH). Zn(2+) contacts are provided by Cys212, His237, and Glu241. A 'KMSKS' region motif is present at residues 268 to 272 (KMSKS). Lys271 provides a ligand contact to ATP.

The protein belongs to the class-I aminoacyl-tRNA synthetase family. In terms of assembly, monomer. Zn(2+) serves as cofactor.

It is found in the cytoplasm. It carries out the reaction tRNA(Cys) + L-cysteine + ATP = L-cysteinyl-tRNA(Cys) + AMP + diphosphate. This is Cysteine--tRNA ligase from Corynebacterium glutamicum (strain ATCC 13032 / DSM 20300 / JCM 1318 / BCRC 11384 / CCUG 27702 / LMG 3730 / NBRC 12168 / NCIMB 10025 / NRRL B-2784 / 534).